We begin with the raw amino-acid sequence, 969 residues long: Protein translocase subunit SecA (969 aa).

ATP contacts are provided by residues Gln-99, 117–121 (GEGKT), and Asp-631.

Belongs to the SecA family. Monomer and homodimer. Part of the essential Sec protein translocation apparatus which comprises SecA, SecYEG and auxiliary proteins SecDF. Other proteins may also be involved.

Its subcellular location is the cell inner membrane. It is found in the cytoplasm. The catalysed reaction is ATP + H2O + cellular proteinSide 1 = ADP + phosphate + cellular proteinSide 2.. Part of the Sec protein translocase complex. Interacts with the SecYEG preprotein conducting channel. Has a central role in coupling the hydrolysis of ATP to the transfer of proteins into and across the cell membrane, serving as an ATP-driven molecular motor driving the stepwise translocation of polypeptide chains across the membrane. This is Protein translocase subunit SecA from Chlamydia abortus (strain DSM 27085 / S26/3) (Chlamydophila abortus).